The primary structure comprises 275 residues: 4-diphosphocytidyl-2-C-methyl-D-erythritol kinase (275 aa).

The active site involves Lys14. 98–108 is an ATP binding site; the sequence is PMGAGLGGGSS. Asp140 is a catalytic residue.

Belongs to the GHMP kinase family. IspE subfamily.

The catalysed reaction is 4-CDP-2-C-methyl-D-erythritol + ATP = 4-CDP-2-C-methyl-D-erythritol 2-phosphate + ADP + H(+). Its pathway is isoprenoid biosynthesis; isopentenyl diphosphate biosynthesis via DXP pathway; isopentenyl diphosphate from 1-deoxy-D-xylulose 5-phosphate: step 3/6. Functionally, catalyzes the phosphorylation of the position 2 hydroxy group of 4-diphosphocytidyl-2C-methyl-D-erythritol. The polypeptide is 4-diphosphocytidyl-2-C-methyl-D-erythritol kinase (Francisella tularensis subsp. holarctica (strain FTNF002-00 / FTA)).